The sequence spans 405 residues: Acetylornithine aminotransferase (405 aa).

Residues 107–108 (GA) and phenylalanine 140 contribute to the pyridoxal 5'-phosphate site. Residue arginine 143 coordinates N(2)-acetyl-L-ornithine. 225 to 228 (DEVQ) provides a ligand contact to pyridoxal 5'-phosphate. N6-(pyridoxal phosphate)lysine is present on lysine 254. N(2)-acetyl-L-ornithine is bound at residue serine 282. Threonine 283 contributes to the pyridoxal 5'-phosphate binding site.

The protein belongs to the class-III pyridoxal-phosphate-dependent aminotransferase family. ArgD subfamily. In terms of assembly, homodimer. The cofactor is pyridoxal 5'-phosphate.

It is found in the cytoplasm. It carries out the reaction N(2)-acetyl-L-ornithine + 2-oxoglutarate = N-acetyl-L-glutamate 5-semialdehyde + L-glutamate. The protein operates within amino-acid biosynthesis; L-arginine biosynthesis; N(2)-acetyl-L-ornithine from L-glutamate: step 4/4. The polypeptide is Acetylornithine aminotransferase (Shewanella oneidensis (strain ATCC 700550 / JCM 31522 / CIP 106686 / LMG 19005 / NCIMB 14063 / MR-1)).